We begin with the raw amino-acid sequence, 626 residues long: Anaphase-promoting complex subunit CDC23 (626 aa).

S59 carries the post-translational modification Phosphoserine; by CDC28. TPR repeat units lie at residues 215-248 (ALLYYLRGVILKQEKNISKAMSSFLKSLSCYSFN), 295-328 (MIKFFKLKVFEELNGQLEDYFEDLEFLLQVFPNF), 329-362 (TFLKAYNATISYNNLDYVTAESRFDDIVKQDPYR), 363-396 (LNDLETYSNILYVMQKNSKLAYLAQFVSQIDRFR), 397-430 (PETCCIIANYYSARQEHEKSIMYFRRALTLDKKT), 431-464 (TNAWTLMGHEFVELSNSHAAIECYRRAVDICPRD), 465-498 (FKAWFGLGQAYALLDMHLYSLYYFQKACTLKPWD), 499-532 (RRIWQVLGECYSKTGNKVEAIKCYKRSIKASQTV), and 536-569 (TSIYYRLAQLYEELEDLQECKKFMMKCVDVEELL).

This sequence belongs to the APC8/CDC23 family. As to quaternary structure, the APC/C is composed of at least 13 subunits that stay tightly associated throughout the cell cycle: APC1, APC2, APC4, APC5, APC9, APC11, CDC16, CDC23, CDC26, CDC27, DOC1, MND2 and SWM1. CDC23 interacts directly with SWM1 and binds the destruction box (D-box) of the substrate cyclin CLB2. Phosphorylated by CDC28, which is required for the early mitotic activity of the APC/C in its CDC20-bound form.

The protein localises to the nucleus. The protein resides in the chromosome. It is found in the centromere. Its subcellular location is the kinetochore. It participates in protein modification; protein ubiquitination. Its function is as follows. Component of the anaphase promoting complex/cyclosome (APC/C), a cell cycle-regulated E3 ubiquitin-protein ligase complex that controls progression through mitosis and the G1 phase of the cell cycle. The APC/C is thought to confer substrate specificity and, in the presence of ubiquitin-conjugating E2 enzymes, it catalyzes the formation of protein-ubiquitin conjugates that are subsequently degraded by the 26S proteasome. In early mitosis, the APC/C is activated by CDC20 and targets securin PDS1, the B-type cyclin CLB5, and other anaphase inhibitory proteins for proteolysis, thereby triggering the separation of sister chromatids at the metaphase-to-anaphase transition. In late mitosis and in G1, degradation of CLB5 allows activation of the APC/C by CDH1, which is needed to destroy CDC20 and the B-type cyclin CLB2 to allow exit from mitosis and creating the low CDK state necessary for cytokinesis and for reforming prereplicative complexes in G1 prior to another round of replication. The sequence is that of Anaphase-promoting complex subunit CDC23 (CDC23) from Saccharomyces cerevisiae (strain ATCC 204508 / S288c) (Baker's yeast).